The chain runs to 315 residues: Small ribosomal subunit protein uS2 (315 aa).

Positions 250–315 are disordered; sequence LLEQGDAAKA…TESEKAPVSE (66 aa). Basic and acidic residues-rich tracts occupy residues 272–282 and 297–315; these read VSAKNEAKSED and TEAKIEAEATESEKAPVSE.

The protein belongs to the universal ribosomal protein uS2 family.

The chain is Small ribosomal subunit protein uS2 from Clavibacter michiganensis subsp. michiganensis (strain NCPPB 382).